The primary structure comprises 396 residues: Subtilisin-like protease 5 (396 aa).

An N-terminal signal peptide occupies residues 1–20; the sequence is MTGFLTILSLSLAALSVTNA. Residues 21–116 constitute a propeptide that is removed on maturation; the sequence is AQILSVPQGA…VEPDAIIKQH (96 aa). Residues 37 to 114 enclose the Inhibitor I9 domain; the sequence is YIVVMKDDTS…AFVEPDAIIK (78 aa). The Peptidase S8 domain maps to 125–396; it reads PWGLSRLSNR…SRLLYNGSGR (272 aa). Catalysis depends on charge relay system residues D156 and H187. N-linked (GlcNAc...) asparagine glycosylation is found at N230 and N248. Residue S342 is the Charge relay system of the active site. The interval 376 to 396 is disordered; the sequence is PTIRNPGPDTTSRLLYNGSGR. N-linked (GlcNAc...) asparagine glycosylation is present at N392.

The protein belongs to the peptidase S8 family.

The protein localises to the secreted. Its function is as follows. Secreted subtilisin-like serine protease with keratinolytic activity that contributes to pathogenicity. In Arthroderma gypseum (strain ATCC MYA-4604 / CBS 118893) (Microsporum gypseum), this protein is Subtilisin-like protease 5 (SUB5).